Here is a 315-residue protein sequence, read N- to C-terminus: Acetyl-coenzyme A carboxylase carboxyl transferase subunit alpha (315 aa).

In terms of domain architecture, CoA carboxyltransferase C-terminal spans 40 to 293 (LQDKSKTLTE…REELSSQLAM (254 aa)).

It belongs to the AccA family. As to quaternary structure, acetyl-CoA carboxylase is a heterohexamer composed of biotin carboxyl carrier protein (AccB), biotin carboxylase (AccC) and two subunits each of ACCase subunit alpha (AccA) and ACCase subunit beta (AccD).

The protein localises to the cytoplasm. It catalyses the reaction N(6)-carboxybiotinyl-L-lysyl-[protein] + acetyl-CoA = N(6)-biotinyl-L-lysyl-[protein] + malonyl-CoA. It functions in the pathway lipid metabolism; malonyl-CoA biosynthesis; malonyl-CoA from acetyl-CoA: step 1/1. In terms of biological role, component of the acetyl coenzyme A carboxylase (ACC) complex. First, biotin carboxylase catalyzes the carboxylation of biotin on its carrier protein (BCCP) and then the CO(2) group is transferred by the carboxyltransferase to acetyl-CoA to form malonyl-CoA. This chain is Acetyl-coenzyme A carboxylase carboxyl transferase subunit alpha, found in Pseudomonas syringae pv. syringae (strain B728a).